Consider the following 183-residue polypeptide: Outer membrane protein H.8 (183 aa).

A signal peptide spans 1–17 (MKAYLALISAAVIGLAA). C18 carries the N-palmitoyl cysteine lipid modification. Residue C18 is the site of S-diacylglycerol cysteine attachment. Residues 27–51 (AEATPAGEAPASEAPAAEAAPADAA) form a disordered region. The 127-residue stretch at 57–183 (GNCAATVESN…LMNGKVTLVD (127 aa)) folds into the Plastocyanin-like domain. Cu cation is bound by residues H102, C166, H171, and M175.

Cu cation is required as a cofactor.

The protein localises to the cell outer membrane. This Neisseria gonorrhoeae protein is Outer membrane protein H.8.